The chain runs to 210 residues: Proteasome subunit beta 2 (210 aa).

The propeptide at 1–12 (MSNNVEEKILHG) is removed in mature form; by autocatalysis. Threonine 13 (nucleophile) is an active-site residue.

Belongs to the peptidase T1B family. The 20S proteasome core is composed of 14 alpha and 14 beta subunits that assemble into four stacked heptameric rings, resulting in a barrel-shaped structure. The two inner rings, each composed of seven catalytic beta subunits, are sandwiched by two outer rings, each composed of seven alpha subunits. The catalytic chamber with the active sites is on the inside of the barrel. Has a gated structure, the ends of the cylinder being occluded by the N-termini of the alpha-subunits. Is capped at one or both ends by the proteasome regulatory ATPase, PAN.

Its subcellular location is the cytoplasm. It catalyses the reaction Cleavage of peptide bonds with very broad specificity.. With respect to regulation, the formation of the proteasomal ATPase PAN-20S proteasome complex, via the docking of the C-termini of PAN into the intersubunit pockets in the alpha-rings, triggers opening of the gate for substrate entry. Interconversion between the open-gate and close-gate conformations leads to a dynamic regulation of the 20S proteasome proteolysis activity. Its function is as follows. Component of the proteasome core, a large protease complex with broad specificity involved in protein degradation. The polypeptide is Proteasome subunit beta 2 (Nitrosopumilus maritimus (strain SCM1)).